The primary structure comprises 111 residues: Nucleoid-associated protein NMC1380 (111 aa).

It belongs to the YbaB/EbfC family. As to quaternary structure, homodimer.

The protein resides in the cytoplasm. Its subcellular location is the nucleoid. In terms of biological role, binds to DNA and alters its conformation. May be involved in regulation of gene expression, nucleoid organization and DNA protection. The protein is Nucleoid-associated protein NMC1380 of Neisseria meningitidis serogroup C / serotype 2a (strain ATCC 700532 / DSM 15464 / FAM18).